Reading from the N-terminus, the 186-residue chain is Probable nicotinate-nucleotide adenylyltransferase (186 aa).

This sequence belongs to the NadD family.

The enzyme catalyses nicotinate beta-D-ribonucleotide + ATP + H(+) = deamido-NAD(+) + diphosphate. Its pathway is cofactor biosynthesis; NAD(+) biosynthesis; deamido-NAD(+) from nicotinate D-ribonucleotide: step 1/1. Its function is as follows. Catalyzes the reversible adenylation of nicotinate mononucleotide (NaMN) to nicotinic acid adenine dinucleotide (NaAD). The protein is Probable nicotinate-nucleotide adenylyltransferase of Thermus thermophilus (strain ATCC BAA-163 / DSM 7039 / HB27).